Consider the following 845-residue polypeptide: Protein translocase subunit SecA (845 aa).

Residues glutamine 85, 103–107 (GEGKT), and aspartate 492 contribute to the ATP site. Positions 787-845 (REQVAQGQAEHPETEQDAAAQSNTSAKRQPVRVDKKVGRNDLCPCGSGKKFKNCHGRNA) are disordered. 4 residues coordinate Zn(2+): cysteine 829, cysteine 831, cysteine 840, and histidine 841. A compositionally biased stretch (basic residues) spans 835 to 845 (KKFKNCHGRNA).

The protein belongs to the SecA family. In terms of assembly, monomer and homodimer. Part of the essential Sec protein translocation apparatus which comprises SecA, SecYEG and auxiliary proteins SecDF. Other proteins may also be involved. Zn(2+) is required as a cofactor.

Its subcellular location is the cell membrane. It localises to the cytoplasm. The enzyme catalyses ATP + H2O + cellular proteinSide 1 = ADP + phosphate + cellular proteinSide 2.. Functionally, part of the Sec protein translocase complex. Interacts with the SecYEG preprotein conducting channel. Has a central role in coupling the hydrolysis of ATP to the transfer of proteins into and across the cell membrane, serving as an ATP-driven molecular motor driving the stepwise translocation of polypeptide chains across the membrane. This Enterococcus faecalis (strain ATCC 700802 / V583) protein is Protein translocase subunit SecA.